The sequence spans 141 residues: Nucleoside diphosphate kinase (141 aa).

ATP-binding residues include Lys-11, Phe-59, Arg-87, Thr-93, Arg-104, and Asn-114. Catalysis depends on His-117, which acts as the Pros-phosphohistidine intermediate.

The protein belongs to the NDK family. As to quaternary structure, homotetramer. The cofactor is Mg(2+).

Its subcellular location is the cytoplasm. The enzyme catalyses a 2'-deoxyribonucleoside 5'-diphosphate + ATP = a 2'-deoxyribonucleoside 5'-triphosphate + ADP. It catalyses the reaction a ribonucleoside 5'-diphosphate + ATP = a ribonucleoside 5'-triphosphate + ADP. In terms of biological role, major role in the synthesis of nucleoside triphosphates other than ATP. The ATP gamma phosphate is transferred to the NDP beta phosphate via a ping-pong mechanism, using a phosphorylated active-site intermediate. This is Nucleoside diphosphate kinase from Burkholderia cenocepacia (strain HI2424).